We begin with the raw amino-acid sequence, 268 residues long: Interleukin-1 beta (268 aa).

Residues 1 to 116 (MATVPELTSE…TWDDYSLECD (116 aa)) constitute a propeptide that is removed on maturation.

The protein belongs to the IL-1 family. In terms of assembly, monomer. In its precursor form, weakly interacts with full-length MEFV; the mature cytokine does not interact at all. Interacts with integrins ITGAV:ITGBV and ITGA5:ITGB1; integrin-binding is required for IL1B signaling. Interacts with cargo receptor TMED10; the interaction is direct and is required for the secretion of IL1B mature form. Interacts with HSP90AB1; the interaction facilitates cargo translocation into the ERGIC. Interacts with HSP90B1; the interaction facilitates cargo translocation into the ERGIC.

It localises to the cytoplasm. It is found in the cytosol. The protein resides in the secreted. Its subcellular location is the lysosome. The protein localises to the extracellular exosome. Its function is as follows. Potent pro-inflammatory cytokine. Initially discovered as the major endogenous pyrogen, induces prostaglandin synthesis, neutrophil influx and activation, T-cell activation and cytokine production, B-cell activation and antibody production, and fibroblast proliferation and collagen production. Promotes Th17 differentiation of T-cells. Synergizes with IL12/interleukin-12 to induce IFNG synthesis from T-helper 1 (Th1) cells. Plays a role in angiogenesis by inducing VEGF production synergistically with TNF and IL6. Involved in transduction of inflammation downstream of pyroptosis: its mature form is specifically released in the extracellular milieu by passing through the gasdermin-D (GSDMD) pore. The protein is Interleukin-1 beta (IL1B) of Oryctolagus cuniculus (Rabbit).